The sequence spans 339 residues: Phenylalanine--tRNA ligase alpha subunit (339 aa).

Residue glutamate 254 coordinates Mg(2+).

The protein belongs to the class-II aminoacyl-tRNA synthetase family. Phe-tRNA synthetase alpha subunit type 1 subfamily. In terms of assembly, tetramer of two alpha and two beta subunits. Mg(2+) serves as cofactor.

Its subcellular location is the cytoplasm. It carries out the reaction tRNA(Phe) + L-phenylalanine + ATP = L-phenylalanyl-tRNA(Phe) + AMP + diphosphate + H(+). The protein is Phenylalanine--tRNA ligase alpha subunit of Clostridium botulinum (strain Alaska E43 / Type E3).